The following is a 750-amino-acid chain: Cation-transporting P-type ATPase B (750 aa).

Residues 17–80 (RRIQLDVAGM…VIEQAGYRAT (64 aa)) enclose the HMA domain. A metal cation contacts are provided by cysteine 28 and cysteine 31. The next 6 helical transmembrane spans lie at 104–124 (LIVAALLFVPLADLSTMFAIV), 129–149 (FPGWGYLLTALAAPIVTWAAW), 167–187 (ETLISAGILAATGWSLSTIFV), 200–220 (AILHSDSIYFEVAAGVTVFVL), 360–380 (IAAVFVPMVFVIAGLAGASWL), and 389–409 (AFSVVLGVLVIACPCTLGLAT). Aspartate 445 serves as the catalytic 4-aspartylphosphate intermediate. Transmembrane regions (helical) follow at residues 471–491 (VLALASAVEAASEHSVATAIV), 500–520 (VADFVAFAGCGVSGVVAEHHV), 547–567 (SRGETVVFVSVDGVACGAVAI), 663–683 (VAIGAADLILVRDSLGVVPVA), 693–713 (TIRINMIWAFGYNVAAIPIAS), and 715–735 (GLLNPLIAGAAMAFSSFFVVS).

The protein belongs to the cation transport ATPase (P-type) (TC 3.A.3) family. Type IB subfamily.

It is found in the cell membrane. It catalyses the reaction ATP + H2O = ADP + phosphate + H(+). The protein is Cation-transporting P-type ATPase B (ctpB) of Mycobacterium leprae (strain TN).